A 128-amino-acid chain; its full sequence is Protein ApaG (128 aa).

One can recognise an ApaG domain in the interval 1–123 (MTSSPDITVS…FRLDIAPESG (123 aa)).

The sequence is that of Protein ApaG from Deinococcus radiodurans (strain ATCC 13939 / DSM 20539 / JCM 16871 / CCUG 27074 / LMG 4051 / NBRC 15346 / NCIMB 9279 / VKM B-1422 / R1).